The following is a 560-amino-acid chain: RNA polymerase-associated protein C651.09c (560 aa).

Disordered stretches follow at residues 15–74 (DDSD…KNPY) and 128–207 (YMAQ…KVEQ). The span at 148-171 (GKRDKLTELKKRRQERSARSVSER) shows a compositional bias: basic and acidic residues. Acidic residues predominate over residues 180–195 (DYEEQNESEKSEEEEG). Serine 197 bears the Phosphoserine mark. In terms of domain architecture, Plus3 spans 214 to 345 (SANLYDLNAI…KLNDLRDMSK (132 aa)). Residues 387 to 456 (AGNAELVKEI…RRRLSAAATA (70 aa)) adopt a coiled-coil conformation. Over residues 440 to 449 (EQRMNEERRR) the composition is skewed to basic and acidic residues. Positions 440 to 486 (EQRMNEERRRLSAAATATPMSAPTSVLTGTSPQPSPSLSTSIMSTPK) are disordered. Positions 451–480 (SAAATATPMSAPTSVLTGTSPQPSPSLSTS) are enriched in low complexity. Residues serine 502 and serine 506 each carry the phosphoserine modification.

Component of the PAF1 complex.

Its subcellular location is the nucleus. The protein resides in the nucleoplasm. The PAF1 complex is a multifunctional complex. Involved in transcription initiation via genetic interactions with TATA-binding proteins. Involved in elongation. Also has a role in transcription-coupled histone modification. Important for TATA site selection by TBP. Directly or indirectly regulates the DNA-binding properties of the TATA box-binding protein, and the relative activities of different TATA elements. The protein is RNA polymerase-associated protein C651.09c of Schizosaccharomyces pombe (strain 972 / ATCC 24843) (Fission yeast).